The primary structure comprises 327 residues: Phenylalanine--tRNA ligase alpha subunit (327 aa).

Glutamate 252 contributes to the Mg(2+) binding site.

Belongs to the class-II aminoacyl-tRNA synthetase family. Phe-tRNA synthetase alpha subunit type 1 subfamily. Tetramer of two alpha and two beta subunits. Requires Mg(2+) as cofactor.

It is found in the cytoplasm. It carries out the reaction tRNA(Phe) + L-phenylalanine + ATP = L-phenylalanyl-tRNA(Phe) + AMP + diphosphate + H(+). The polypeptide is Phenylalanine--tRNA ligase alpha subunit (Haemophilus ducreyi (strain 35000HP / ATCC 700724)).